A 205-amino-acid polypeptide reads, in one-letter code: Thymidine kinase (205 aa).

Residues 9–16 (SAMNAGKS) and 87–90 (DECQ) each bind ATP. Residue Glu88 is the Proton acceptor of the active site. Zn(2+) is bound by residues Cys145, Cys147, Cys182, and His185.

This sequence belongs to the thymidine kinase family. Homotetramer.

Its subcellular location is the cytoplasm. It catalyses the reaction thymidine + ATP = dTMP + ADP + H(+). Its activity is regulated as follows. Allosteric enzyme which is feedback inhibited by dTTP and activated by a number of dNDP and dNTP. Its function is as follows. Phosphorylates both thymidine and deoxyuridine. In Escherichia coli O157:H7, this protein is Thymidine kinase.